Consider the following 493-residue polypeptide: Glutamyl-tRNA(Gln) amidotransferase subunit A (493 aa).

Residues Lys78 and Ser158 each act as charge relay system in the active site. Ser182 acts as the Acyl-ester intermediate in catalysis.

This sequence belongs to the amidase family. GatA subfamily. In terms of assembly, heterotrimer of A, B and C subunits.

It carries out the reaction L-glutamyl-tRNA(Gln) + L-glutamine + ATP + H2O = L-glutaminyl-tRNA(Gln) + L-glutamate + ADP + phosphate + H(+). In terms of biological role, allows the formation of correctly charged Gln-tRNA(Gln) through the transamidation of misacylated Glu-tRNA(Gln) in organisms which lack glutaminyl-tRNA synthetase. The reaction takes place in the presence of glutamine and ATP through an activated gamma-phospho-Glu-tRNA(Gln). In Methylorubrum populi (strain ATCC BAA-705 / NCIMB 13946 / BJ001) (Methylobacterium populi), this protein is Glutamyl-tRNA(Gln) amidotransferase subunit A.